We begin with the raw amino-acid sequence, 326 residues long: D-threonate 4-phosphate dehydrogenase (326 aa).

Substrate contacts are provided by His138 and Thr139. Residues His168, His212, and His267 each coordinate a divalent metal cation. Substrate contacts are provided by Lys275, Asn284, and Arg293.

The protein belongs to the PdxA family. PdxA2 subfamily. In terms of assembly, homodimer. It depends on a divalent metal cation as a cofactor.

The enzyme catalyses 4-O-phospho-D-threonate + NAD(+) = dihydroxyacetone phosphate + CO2 + NADH. Catalyzes the NAD-dependent oxidation and subsequent decarboxylation of D-threonate 4-phosphate to produce dihydroxyacetone phosphate (DHAP). Can also use 4-hydroxy-L-threonine 4-phosphate as substrate. The protein is D-threonate 4-phosphate dehydrogenase of Pectobacterium atrosepticum (strain SCRI 1043 / ATCC BAA-672) (Erwinia carotovora subsp. atroseptica).